Reading from the N-terminus, the 508-residue chain is Photosystem II CP47 reaction center protein (508 aa).

6 helical membrane passes run 21–36, 101–115, 140–156, 203–218, 237–252, and 457–472; these read SVHLMHTALVSGWAGS, IVLSGLLFLAAIWHW, GIHLFLSGVLCFGFGAF, IAAGILGILAGLFHLS, VLSSSIAAVFFAAFVV, and TFALIFFFGHIWHGAR.

It belongs to the PsbB/PsbC family. PsbB subfamily. In terms of assembly, PSII is composed of 1 copy each of membrane proteins PsbA, PsbB, PsbC, PsbD, PsbE, PsbF, PsbH, PsbI, PsbJ, PsbK, PsbL, PsbM, PsbT, PsbX, PsbY, PsbZ, Psb30/Ycf12, at least 3 peripheral proteins of the oxygen-evolving complex and a large number of cofactors. It forms dimeric complexes. Binds multiple chlorophylls. PSII binds additional chlorophylls, carotenoids and specific lipids. serves as cofactor.

Its subcellular location is the plastid. It is found in the chloroplast thylakoid membrane. One of the components of the core complex of photosystem II (PSII). It binds chlorophyll and helps catalyze the primary light-induced photochemical processes of PSII. PSII is a light-driven water:plastoquinone oxidoreductase, using light energy to abstract electrons from H(2)O, generating O(2) and a proton gradient subsequently used for ATP formation. This chain is Photosystem II CP47 reaction center protein, found in Angiopteris evecta (Mule's foot fern).